Here is a 689-residue protein sequence, read N- to C-terminus: Protein asunder (689 aa).

Positions 521 to 550 (NGARLKLSKAKDQYRLLYRELEQLIQLNAT) form a coiled coil. Residues 578–619 (GASLLRSYTESPLSPERLEPITSGSASGSSNSNSLLKASKRR) are disordered. Positions 600–614 (SGSASGSSNSNSLLK) are enriched in low complexity. Residues 613-619 (LKASKRR) carry the Nuclear localization signal (NLS) motif.

The protein belongs to the Integrator subunit 13 family. Belongs to the multiprotein complex Integrator, at least composed of IntS1, IntS2, IntS3, IntS4, omd/IntS5, IntS6, defl/IntS7, IntS8, IntS9, IntS10, IntS11, IntS12, asun/IntS13, IntS14 and IntS15. The core complex associates with protein phosphatase 2A subunits mts/PP2A and Pp2A-29B, to form the Integrator-PP2A (INTAC) complex. Post-translationally, phosphorylated.

The protein localises to the nucleus. The protein resides in the cytoplasm. Its subcellular location is the perinuclear region. Functionally, component of the integrator complex, a multiprotein complex that terminates RNA polymerase II (Pol II) transcription in the promoter-proximal region of genes. The integrator complex provides a quality checkpoint during transcription elongation by driving premature transcription termination of transcripts that are unfavorably configured for transcriptional elongation: the complex terminates transcription by (1) catalyzing dephosphorylation of the C-terminal domain (CTD) of Pol II subunit Polr2A/Rbp1 and Spt5, and (2) degrading the exiting nascent RNA transcript via endonuclease activity. The integrator complex is also involved in the 3'-end processing of the U7 snRNA, and also the spliceosomal snRNAs U1, U2, U4 and U5. This chain is Protein asunder (asun), found in Drosophila erecta (Fruit fly).